Here is a 464-residue protein sequence, read N- to C-terminus: Asparagine--tRNA ligase (464 aa).

This sequence belongs to the class-II aminoacyl-tRNA synthetase family. Homodimer.

It localises to the cytoplasm. It catalyses the reaction tRNA(Asn) + L-asparagine + ATP = L-asparaginyl-tRNA(Asn) + AMP + diphosphate + H(+). In Xanthomonas campestris pv. campestris (strain 8004), this protein is Asparagine--tRNA ligase.